Reading from the N-terminus, the 544-residue chain is Chaperonin GroEL (544 aa).

ATP contacts are provided by residues 29 to 32 (TLGP), 86 to 90 (DGTTT), Gly413, 476 to 478 (NAL), and Asp492.

This sequence belongs to the chaperonin (HSP60) family. In terms of assembly, forms a cylinder of 14 subunits composed of two heptameric rings stacked back-to-back. Interacts with the co-chaperonin GroES.

The protein localises to the cytoplasm. It carries out the reaction ATP + H2O + a folded polypeptide = ADP + phosphate + an unfolded polypeptide.. Its function is as follows. Together with its co-chaperonin GroES, plays an essential role in assisting protein folding. The GroEL-GroES system forms a nano-cage that allows encapsulation of the non-native substrate proteins and provides a physical environment optimized to promote and accelerate protein folding. This is Chaperonin GroEL from Desulfitobacterium hafniense (strain DSM 10664 / DCB-2).